The following is an 82-amino-acid chain: Defensin-like protein 22 (82 aa).

Positions 1-24 (MAGLKVFSFALLLILTFSLIDVEG) are cleaved as a signal peptide. Disulfide bonds link C34/C82, C44/C69, C53/C78, and C57/C80.

The protein belongs to the DEFL family.

The protein localises to the secreted. This chain is Defensin-like protein 22, found in Arabidopsis thaliana (Mouse-ear cress).